Here is a 370-residue protein sequence, read N- to C-terminus: tRNA-specific 2-thiouridylase MnmA (370 aa).

ATP is bound by residues 19-26 and Leu-45; that span reads AMSGGVDS. The Nucleophile role is filled by Cys-113. Cysteines 113 and 209 form a disulfide. Position 137 (Gly-137) interacts with ATP. The segment at 159-161 is interaction with tRNA; sequence RDQ. Cys-209 acts as the Cysteine persulfide intermediate in catalysis.

This sequence belongs to the MnmA/TRMU family.

It is found in the cytoplasm. The enzyme catalyses S-sulfanyl-L-cysteinyl-[protein] + uridine(34) in tRNA + AH2 + ATP = 2-thiouridine(34) in tRNA + L-cysteinyl-[protein] + A + AMP + diphosphate + H(+). Functionally, catalyzes the 2-thiolation of uridine at the wobble position (U34) of tRNA, leading to the formation of s(2)U34. The protein is tRNA-specific 2-thiouridylase MnmA of Zymomonas mobilis subsp. mobilis (strain ATCC 31821 / ZM4 / CP4).